The sequence spans 201 residues: Putative pseudouridine methyltransferase (201 aa).

S-adenosyl-L-methionine is bound by residues Met-132 and Cys-186.

It belongs to the methyltransferase superfamily. TrmY family.

Its subcellular location is the cytoplasm. In Vibrio cholerae serotype O1 (strain ATCC 39315 / El Tor Inaba N16961), this protein is Putative pseudouridine methyltransferase.